Reading from the N-terminus, the 163-residue chain is 2-C-methyl-D-erythritol 2,4-cyclodiphosphate synthase (163 aa).

A divalent metal cation contacts are provided by aspartate 9 and histidine 11. Residues 9 to 11 and 36 to 37 contribute to the 4-CDP-2-C-methyl-D-erythritol 2-phosphate site; these read DVH and HS. An a divalent metal cation-binding site is contributed by histidine 44. Residues 58–60, 63–67, 134–137, phenylalanine 141, and arginine 144 contribute to the 4-CDP-2-C-methyl-D-erythritol 2-phosphate site; these read DIG, FPDDD, and TTSE.

The protein belongs to the IspF family. Homotrimer. It depends on a divalent metal cation as a cofactor.

It carries out the reaction 4-CDP-2-C-methyl-D-erythritol 2-phosphate = 2-C-methyl-D-erythritol 2,4-cyclic diphosphate + CMP. Its pathway is isoprenoid biosynthesis; isopentenyl diphosphate biosynthesis via DXP pathway; isopentenyl diphosphate from 1-deoxy-D-xylulose 5-phosphate: step 4/6. In terms of biological role, involved in the biosynthesis of isopentenyl diphosphate (IPP) and dimethylallyl diphosphate (DMAPP), two major building blocks of isoprenoid compounds. Catalyzes the conversion of 4-diphosphocytidyl-2-C-methyl-D-erythritol 2-phosphate (CDP-ME2P) to 2-C-methyl-D-erythritol 2,4-cyclodiphosphate (ME-CPP) with a corresponding release of cytidine 5-monophosphate (CMP). The protein is 2-C-methyl-D-erythritol 2,4-cyclodiphosphate synthase of Halorhodospira halophila (strain DSM 244 / SL1) (Ectothiorhodospira halophila (strain DSM 244 / SL1)).